Consider the following 621-residue polypeptide: Chaperone protein HtpG (621 aa).

The tract at residues 1–328 (MTQEKKKFDA…SEDLPLNISR (328 aa)) is a; substrate-binding. The b stretch occupies residues 329–544 (ESLQHNSVLE…DSAMDIRMER (216 aa)). The segment at 475–495 (SDIDVEQTTSQSEDKNTHSKK) is disordered. Over residues 486–495 (SEDKNTHSKK) the composition is skewed to basic and acidic residues. The tract at residues 545-621 (FLIEQKQITA…LNDIVQKAIL (77 aa)) is c.

This sequence belongs to the heat shock protein 90 family. In terms of assembly, homodimer.

It is found in the cytoplasm. Its function is as follows. Molecular chaperone. Has ATPase activity. The protein is Chaperone protein HtpG of Rickettsia akari (strain Hartford).